Here is a 175-residue protein sequence, read N- to C-terminus: VQ motif-containing protein 25 (175 aa).

Residues 50–59 (FRELVQSLTG) carry the VQ motif.

The protein localises to the nucleus. Functionally, may function as negative regulator of plant defense. This chain is VQ motif-containing protein 25, found in Arabidopsis thaliana (Mouse-ear cress).